We begin with the raw amino-acid sequence, 250 residues long: Acyl-coenzyme A diphosphatase fit1 (250 aa).

The Cytoplasmic portion of the chain corresponds to 1–23 (MTEKTASHYWNEETSILKLRRKD). A helical transmembrane segment spans residues 24–44 (ILLFEIYATTLLLGSIYSIYV). Residues 45 to 58 (DKWSITSYFGNSKN) are Lumenal-facing. The helical transmembrane segment at 59 to 79 (LINLIFVKRGWFWTSLVYFYH) threads the bilayer. Topologically, residues 80 to 95 (AWDQKRNKIDFKFISR) are cytoplasmic. The chain crosses the membrane as a helical span at residues 96–116 (YIVATLWWMFVTQWFIGPGLI). Topologically, residues 117–160 (DRTFALSGGSCKNFDGDSSVFIPLTASTCKGLNGSWSGGHDLSG) are lumenal. Residue asparagine 149 is glycosylated (N-linked (GlcNAc...) asparagine). Histidine 161 is a catalytic residue. A helical membrane pass occupies residues 161–181 (HVFLLTHSSLFMLSENFSFIL). Topologically, residues 182-191 (NNGIKATSTK) are cytoplasmic. A helical transmembrane segment spans residues 192–212 (VLFGLLGLWWWMLFVTASFYH). Residue histidine 212 is part of the active site. Threonine 213 is a topological domain (lumenal). Residues 214-234 (TFEKCTGFFSGILEWSIVYVF) traverse the membrane as a helical segment. Topologically, residues 235–250 (SSRMPAVADLLGSSDY) are cytoplasmic.

This sequence belongs to the FIT family. Fungal FIT2B/SCS3 subfamily.

The protein localises to the endoplasmic reticulum membrane. It catalyses the reaction an acyl-CoA + H2O = an acyl-4'-phosphopantetheine + adenosine 3',5'-bisphosphate + 2 H(+). The enzyme catalyses (9Z)-octadecenoyl-CoA + H2O = S-(9Z-octadecenoyl)-4'-phosphopantetheine + adenosine 3',5'-bisphosphate + 2 H(+). It carries out the reaction (5Z,8Z,11Z,14Z)-eicosatetraenoyl-CoA + H2O = S-(5Z,8Z,11Z,14Z-eicosatetraenoyl)-4'-phosphopantetheine + adenosine 3',5'-bisphosphate + 2 H(+). The catalysed reaction is hexadecanoyl-CoA + H2O = S-hexadecanoyl-4'-phosphopantetheine + adenosine 3',5'-bisphosphate + 2 H(+). Fatty acyl-coenzyme A (CoA) diphosphatase that hydrolyzes fatty acyl-CoA to yield acyl-4'-phosphopantetheine and adenosine 3',5'-bisphosphate. Preferentially hydrolyzes unsaturated long-chain acyl-CoA substrates in the endoplasmic reticulum (ER) lumen. This catalytic activity is required for maintaining ER structure and for lipid droplets (LDs) biogenesis, which are lipid storage organelles involved in maintaining lipid and energy homeostasis. May directly bind to diacylglycerol (DAGs) and triacylglycerol, which is also important for LD biogenesis. May support directional budding of nacent LDs from the ER into the cytosol by reducing DAG levels at sites of LD formation. May play a role in the regulation of cell morphology and cytoskeletal organization. This Schizosaccharomyces pombe (strain 972 / ATCC 24843) (Fission yeast) protein is Acyl-coenzyme A diphosphatase fit1.